The sequence spans 911 residues: Alpha-actinin-4 (911 aa).

Positions 1–269 are actin-binding; that stretch reads MVDYHAANQS…YVSSFYHAFS (269 aa). The segment at 8–31 is disordered; sequence NQSYQYGPSSGSNGAGGGGTMGDY. Residues 12-26 are interaction with VCL; it reads QYGPSSGSNGAGGGG. At tyrosine 31 the chain carries Phosphotyrosine. Residues 40–61 are interaction with VCL; that stretch reads RDLLLDPAWEKQQRKTFTAWCN. Calponin-homology (CH) domains follow at residues 50 to 154 and 163 to 269; these read KQQR…LRFA and TSAK…HAFS. An LXXLL motif motif is present at residues 84–88; the sequence is LMLLL. An interaction with VCL region spans residues 108–126; sequence KINNVNKALDFIASKGVKL. Lysine 114 is modified (N6-acetyllysine). Positions 177–192 are polyphosphoinositide (PIP2)-binding; the sequence is TAPYKNVNVQNFHISW. Lysine 214 carries the N6-acetyllysine modification. Threonine 249 bears the Phosphothreonine mark. 4 Spectrin repeats span residues 293–403, 413–518, 528–639, and 649–752; these read HLME…WLLN, HLAE…ALEK, QLHL…ALLE, and HLRR…EVEN. N6-acetyllysine occurs at positions 592 and 625. Phosphoserine is present on serine 696. Positions 736–911 are mediates interaction with MICALL2; that stretch reads WEQLLTTIAR…STALYGESDL (176 aa). EF-hand domains follow at residues 765 to 800 and 806 to 841; these read EQMQ…LGYD and QGDA…ETTD. Residue aspartate 778 participates in Ca(2+) binding. An N6-acetyllysine modification is found at lysine 779. Positions 780 and 789 each coordinate Ca(2+). Position 859 is an N6-acetyllysine (lysine 859). Serine 909 is subject to Phosphoserine.

It belongs to the alpha-actinin family. As to quaternary structure, homodimer; antiparallel. Identified in a IGF2BP1-dependent mRNP granule complex containing untranslated mRNAs. Component of the CART complex, at least composed of ACTN4, HGS/HRS, MYO5B and TRIM3. Binds TRIM3 at the N-terminus. Interacts with MAGI1. Interacts with PDLIM2. Identified in a complex with CASK, IQGAP1, MAGI2, NPHS1, SPTAN1 and SPTBN1. Interacts with MICALL2 (preferentially in opened conformation); stimulated by RAB13 activation. Interacts with PPARG and RARA. Binds to VCL; this interaction triggers VCL conformational changes. Interacts with SEPTIN14. Interacts with IGSF8.

It is found in the nucleus. The protein resides in the cytoplasm. Its subcellular location is the cell junction. It localises to the cytoskeleton. The protein localises to the stress fiber. It is found in the perinuclear region. Its function is as follows. F-actin cross-linking protein which is thought to anchor actin to a variety of intracellular structures. This is a bundling protein. Probably involved in vesicular trafficking via its association with the CART complex. The CART complex is necessary for efficient transferrin receptor recycling but not for EGFR degradation. Involved in tight junction assembly in epithelial cells probably through interaction with MICALL2. Links MICALL2 to the actin cytoskeleton and recruits it to the tight junctions. May also function as a transcriptional coactivator, stimulating transcription mediated by the nuclear hormone receptors PPARG and RARA. Association with IGSF8 regulates the immune synapse formation and is required for efficient T-cell activation. This Bos taurus (Bovine) protein is Alpha-actinin-4.